A 1066-amino-acid chain; its full sequence is MPVFHTRTIESILEPVAQQISHLVIMHEEGEVDGKAIPDLTAPVAAVQAAVSNLVRVGKETVQTTEDQILKRDMPPAFIKVENACTKLVQAAQMLQSDPYSVPARDYLIDGSRGILSGTSDLLLTFDEAEVRKIIRVCKGILEYLTVAEVVETMEDLVTYTKNLGPGMTKMAKMIDERQQELTHQEHRVMLVNSMNTVKELLPVLISAMKIFVTTKNSKNQGIEEALKNRNFTVGKMSAEINEIIRVLQLTSWDEDAWASKDTEAMKRALASIDSKLNQAKGWLRDPNASPGDAGEQAIRQILDEAGKVGELCAGKERREILGTCKMLGQMTDQVADLRARGQGASPVAMQKAQQVSQGLDVLTAKVENAARKLEAMTNSKQSIAKKIDAAQNWLADPNGGPEGEEQIRGALAEARKIAELCDDPKERDDILRSLGEIAALTSKLGDLRRQGKGDSPEARALAKQVATALQNLQTKTNRAVANSRPAKAAVHLEGKIEQAQRWIDNPTVDDRGVGQAAIRGLVAEGHRLANVMMGPYRQDLLAKCDRVDQLAAQLADLAARGEGESPQARALASQLQDSLKDLKTQMQEAMTQEVSDVFSDTTTPIKLLAVAATAPPDAPNREEVFDERAANFENHSGRLGATAEKAAAVGAANKSTVEGIQASVKTARELTPQVISAARILLRNPGNQAAYEHFETMKNQWIDNVEKMTGLVDEAIDTKSLLDASEEAIKKDLDKCKVAMANIQPQMLVAGATSIARRANRILLVAKREVENSEDPKFREAVKAASDELSKTISPMVMDAKAVAGNISDPGLQKSFLDSGYRILGAVAKVREAFQPQEPDFPPPPPDLEQLRLTDELAPPKPPLPEGEVPPPRPPPPEEKDEEFPEQKAGEVINQPMMMAARQLHDEARKWSSKGNDIIAAAKRMALLMAEMSRLVRGGSGTKRALIQCAKDIAKASDEVTRLAKEVAKQCTDKRIRTNLLQVCERIPTISTQLKILSTVKATMLGRTNISDEESEQATEMLVHNAQNLMQSVKETVREAEAASIKIRTDAGFTLRWVRKTPWYQ.

The N-terminal globular head stretch occupies residues 1 to 835 (MPVFHTRTIE…GAVAKVREAF (835 aa)). Residue Ser97 is modified to Phosphoserine. The tract at residues 168-208 (MTKMAKMIDERQQELTHQEHRVMLVNSMNTVKELLPVLISA) is talin-interaction. The residue at position 173 (Lys173) is an N6-acetyllysine. Repeat copies occupy residues 259–369 (ASKD…KVEN), 370–479 (AARK…KTNR), and 480–589 (AVAN…QMQE). Residues 259–589 (ASKDTEAMKR…LKDLKTQMQE (331 aa)) are 3 X 112 AA tandem repeats. Phosphoserine is present on residues Ser260, Ser272, Ser275, Ser290, Ser346, and Ser434. N6-acetyllysine is present on Lys496. Tyr537 carries the phosphotyrosine modification. Phosphoserine occurs at positions 574, 579, and 600. 2 positions are modified to phosphothreonine: Thr604 and Thr672. Residue Ser721 is modified to Phosphoserine. The interval 741-764 (MANIQPQMLVAGATSIARRANRIL) is interaction with ACTN4. Residues Ser795 and Ser809 each carry the phosphoserine modification. Tyr822 carries the phosphotyrosine modification. Residues 836–878 (QPQEPDFPPPPPDLEQLRLTDELAPPKPPLPEGEVPPPRPPPP) are linker (Pro-rich). The disordered stretch occupies residues 857–887 (ELAPPKPPLPEGEVPPPRPPPPEEKDEEFPE). Residues 860–876 (PPKPPLPEGEVPPPRPP) are compositionally biased toward pro residues. A C-terminal tail region spans residues 879–1066 (EEKDEEFPEQ…RWVRKTPWYQ (188 aa)). Facilitates phospholipid membrane insertion regions lie at residues 935-978 (RLVR…KRIR) and 1052-1066 (AGFT…PWYQ). At Tyr1065 the chain carries Phosphotyrosine; by SRC-type Tyr-kinases.

It belongs to the vinculin/alpha-catenin family. In terms of assembly, exhibits self-association properties. Part of a complex composed of THSD1, PTK2/FAK1, TLN1 and VCL. Interacts with APBB1IP, NRAP and TLN1. Interacts with CTNNB1 and this interaction is necessary for its localization to the cell-cell junctions and for its function in regulating cell surface expression of E-cadherin. Interacts with SORBS1. Interacts with SYNM. Interacts with CTNNA1. Binds to ACTN4; this interaction triggers conformational changes. Interacts with FLII. In terms of processing, phosphorylated; on serines, threonines and tyrosines. Phosphorylation on Tyr-1065 in activated platelets affects head-tail interactions and cell spreading but has no effect on actin binding nor on localization to focal adhesion plaques. Acetylated; mainly by myristic acid but also by a small amount of palmitic acid.

It is found in the cell membrane. The protein resides in the cell junction. Its subcellular location is the adherens junction. It localises to the focal adhesion. The protein localises to the cytoplasm. It is found in the cytoskeleton. The protein resides in the sarcolemma. Its subcellular location is the cell projection. It localises to the podosome. Its function is as follows. Actin filament (F-actin)-binding protein involved in cell-matrix adhesion and cell-cell adhesion. Regulates cell-surface E-cadherin expression and potentiates mechanosensing by the E-cadherin complex. May also play important roles in cell morphology and locomotion. This is Vinculin from Rattus norvegicus (Rat).